A 3063-amino-acid chain; its full sequence is Genome polyprotein (3063 aa).

In terms of domain architecture, Peptidase S30 spans 141–284; the sequence is KLTEGQMNHL…QSILNSMIQF (144 aa). Active-site for P1 proteinase activity residues include His-192, Asp-201, and Ser-235. An Involved in interaction with stylet and aphid transmission motif is present at residues 334–337; it reads KITC. An Involved in virions binding and aphid transmission motif is present at residues 592–594; the sequence is PTK. The 123-residue stretch at 618-740 folds into the Peptidase C6 domain; that stretch reads LYIAKQGYCY…ESDIKHYRVG (123 aa). Active-site for helper component proteinase activity residues include Cys-626 and His-699. The Helicase ATP-binding domain occupies 1229-1381; the sequence is DIAHSEHLDF…TQQPVKLIVE (153 aa). 1242–1249 serves as a coordination point for ATP; that stretch reads GAVGSGKS. A DECH box motif is present at residues 1331–1334; it reads DECH. The Helicase C-terminal domain occupies 1400–1559; it reads DVVQFGSNVL…NLPVMTGGVS (160 aa). Residues 1884–1892 carry the Nuclear localization signal motif; the sequence is RKKGKGKGT. Residue Tyr-1907 is modified to O-(5'-phospho-RNA)-tyrosine. Positions 1949–1964 are interaction with host EIF4E; the sequence is KMVENDDIEMQALGSN. Residues 2032-2250 enclose the Peptidase C4 domain; it reads AKSLMRGLRD…VLWGPLKLKD (219 aa). Residues His-2077, Asp-2112, and Cys-2182 each act as for nuclear inclusion protein A activity in the active site. The RdRp catalytic domain maps to 2519 to 2643; that stretch reads WVYCDADGSQ…AVNPEKESIL (125 aa). A disordered region spans residues 2798-2841; sequence NDTIDAGGSNKKDAKPEQGSIQPNPNKGKDKDVNAGTSGTHTVP. Residue Thr-3046 is modified to Phosphothreonine.

Belongs to the potyviridae genome polyprotein family. In terms of assembly, interacts with host eIF4E protein (via cap-binding region); this interaction mediates the translation of the VPg-viral RNA conjugates. Part of a complex that comprises VPg, RNA, host EIF4E and EIF4G; this interaction mediates the translation of the VPg-viral RNA conjugates. Interaction is possible in susceptible hosts but impaired in resistant plants: the VPg of strain LYE84 interacts with tomato eIF4E1 and eIF4E2 as well as with the Capsicum annuum eIF4E1 susceptible allele pvr2(+) but not with resistant alleles pvr2(1), pvr2(2), pvr2(3), pvr2(4), pvr2(5), pvr2(6), pvr2(7), pvr2(8) and pvr2(9), the VPg of strain SON41 interacts with C.annuum eIF4E1 susceptible alleles pvr2(+), pvr2(1), pvr2(2), pvr2(3) and pvr2(4) but not with resistant alleles pvr2(5), pvr2(6), pvr2(7), pvr2(8) and pvr2(9), the VPg of strain LYE90 interacts only with tomato eIF4E1. In terms of processing, VPg is uridylylated by the polymerase and is covalently attached to the 5'-end of the genomic RNA. This uridylylated form acts as a nucleotide-peptide primer for the polymerase. Potyviral RNA is expressed as two polyproteins which undergo post-translational proteolytic processing. Genome polyprotein is processed by NIa-pro, P1 and HC-pro proteinases resulting in the production of at least ten individual proteins. P3N-PIPO polyprotein is cleaved by P1 and HC-pro proteinases resulting in the production of three individual proteins. The P1 proteinase and the HC-pro cleave only their respective C-termini autocatalytically. 6K1 is essential for proper proteolytic separation of P3 from CI.

It is found in the host cytoplasmic vesicle. It localises to the host nucleus. The protein resides in the virion. The catalysed reaction is RNA(n) + a ribonucleoside 5'-triphosphate = RNA(n+1) + diphosphate. It catalyses the reaction Hydrolyzes glutaminyl bonds, and activity is further restricted by preferences for the amino acids in P6 - P1' that vary with the species of potyvirus, e.g. Glu-Xaa-Xaa-Tyr-Xaa-Gln-|-(Ser or Gly) for the enzyme from tobacco etch virus. The natural substrate is the viral polyprotein, but other proteins and oligopeptides containing the appropriate consensus sequence are also cleaved.. The enzyme catalyses Hydrolyzes a Gly-|-Gly bond at its own C-terminus, commonly in the sequence -Tyr-Xaa-Val-Gly-|-Gly, in the processing of the potyviral polyprotein.. Functionally, required for aphid transmission and also has proteolytic activity. Only cleaves a Gly-Gly dipeptide at its own C-terminus. Interacts with virions and aphid stylets. Acts as a suppressor of RNA-mediated gene silencing, also known as post-transcriptional gene silencing (PTGS), a mechanism of plant viral defense that limits the accumulation of viral RNAs. May have RNA-binding activity. Has helicase activity. It may be involved in replication. Its function is as follows. Indispensable for virus replication. Reduces the abundance of host transcripts related to jasmonic acid biosynthesis therefore altering the host defenses. In order to increase its own stability, decreases host protein degradation pathways. In terms of biological role, indispensable for virus replication. Functionally, mediates the cap-independent, EIF4E-dependent translation of viral genomic RNAs. Binds to the cap-binding site of host EIF4E and thus interferes with the host EIF4E-dependent mRNA export and translation. VPg-RNA directly binds EIF4E and is a template for transcription. Also forms trimeric complexes with EIF4E-EIF4G, which are templates for translation. Has RNA-binding and proteolytic activities. Its function is as follows. An RNA-dependent RNA polymerase that plays an essential role in the virus replication. In terms of biological role, involved in aphid transmission, cell-to-cell and systemis movement, encapsidation of the viral RNA and in the regulation of viral RNA amplification. The protein is Genome polyprotein of Potato virus Y (strain N) (PVY).